A 454-amino-acid chain; its full sequence is Butyrophilin-like protein 2 (454 aa).

The Cytoplasmic segment spans residues methionine 1 to arginine 6. A helical; Signal-anchor for type II membrane protein transmembrane segment spans residues tyrosine 7–isoleucine 23. Over lysine 24 to tryptophan 454 the chain is Extracellular. Ig-like V-type domains are found at residues aspartate 27 to glutamine 140, proline 148 to alanine 234, alanine 244 to aspartate 355, and proline 365 to serine 452. Cystine bridges form between cysteine 50–cysteine 124, cysteine 164–cysteine 218, cysteine 267–cysteine 341, and cysteine 381–cysteine 435. N-linked (GlcNAc...) asparagine glycosylation is found at asparagine 210, asparagine 296, asparagine 427, and asparagine 432.

The protein belongs to the immunoglobulin superfamily. BTN/MOG family. In terms of tissue distribution, highly expressed in intestine and at reduced levels in lung and stomach. Also expressed in thymus, spleen, lymph nodes, T-cells, B-cells, and macrophages.

Its subcellular location is the membrane. In terms of biological role, negative regulator of T-cell proliferation. The chain is Butyrophilin-like protein 2 from Mus musculus (Mouse).